Here is a 150-residue protein sequence, read N- to C-terminus: Arginine repressor (150 aa).

Belongs to the ArgR family.

It localises to the cytoplasm. The protein operates within amino-acid biosynthesis; L-arginine biosynthesis [regulation]. Regulates arginine biosynthesis genes. The sequence is that of Arginine repressor from Clostridium botulinum (strain Alaska E43 / Type E3).